Consider the following 51-residue polypeptide: Sperm protamine P1 (51 aa).

Cystine bridges form between Cys7–Cys15 and Cys40–Cys48.

Belongs to the protamine P1 family. As to quaternary structure, cross-linked by interchain disulfide bonds around the DNA-helix. Testis.

The protein localises to the nucleus. Its subcellular location is the chromosome. Functionally, protamines substitute for histones in the chromatin of sperm during the haploid phase of spermatogenesis. They compact sperm DNA into a highly condensed, stable and inactive complex. The polypeptide is Sperm protamine P1 (PRM1) (Capra hircus (Goat)).